Reading from the N-terminus, the 473-residue chain is Ribulose bisphosphate carboxylase large chain 3 (473 aa).

2 residues coordinate substrate: N116 and T166. K168 functions as the Proton acceptor in the catalytic mechanism. Residue K170 participates in substrate binding. 3 residues coordinate Mg(2+): K194, D196, and E197. At K194 the chain carries N6-carboxylysine. H287 functions as the Proton acceptor in the catalytic mechanism. Substrate contacts are provided by R288, H320, and S372.

Belongs to the RuBisCO large chain family. Type I subfamily. As to quaternary structure, heterohexadecamer of 8 large chains and 8 small chains. It depends on Mg(2+) as a cofactor.

It catalyses the reaction 2 (2R)-3-phosphoglycerate + 2 H(+) = D-ribulose 1,5-bisphosphate + CO2 + H2O. It carries out the reaction D-ribulose 1,5-bisphosphate + O2 = 2-phosphoglycolate + (2R)-3-phosphoglycerate + 2 H(+). Functionally, ruBisCO catalyzes two reactions: the carboxylation of D-ribulose 1,5-bisphosphate, the primary event in carbon dioxide fixation, as well as the oxidative fragmentation of the pentose substrate. Both reactions occur simultaneously and in competition at the same active site. The polypeptide is Ribulose bisphosphate carboxylase large chain 3 (Nitrobacter hamburgensis (strain DSM 10229 / NCIMB 13809 / X14)).